A 275-amino-acid chain; its full sequence is Light-independent protochlorophyllide reductase iron-sulfur ATP-binding protein (275 aa).

ATP-binding positions include 12-17 (GIGKST) and Lys-41. Ser-16 serves as a coordination point for Mg(2+). Residues Cys-97 and Cys-131 each coordinate [4Fe-4S] cluster. 182–183 (NR) serves as a coordination point for ATP.

This sequence belongs to the NifH/BchL/ChlL family. As to quaternary structure, homodimer. Protochlorophyllide reductase is composed of three subunits; BchL, BchN and BchB. [4Fe-4S] cluster serves as cofactor.

The catalysed reaction is chlorophyllide a + oxidized 2[4Fe-4S]-[ferredoxin] + 2 ADP + 2 phosphate = protochlorophyllide a + reduced 2[4Fe-4S]-[ferredoxin] + 2 ATP + 2 H2O. Its pathway is porphyrin-containing compound metabolism; bacteriochlorophyll biosynthesis (light-independent). In terms of biological role, component of the dark-operative protochlorophyllide reductase (DPOR) that uses Mg-ATP and reduced ferredoxin to reduce ring D of protochlorophyllide (Pchlide) to form chlorophyllide a (Chlide). This reaction is light-independent. The L component serves as a unique electron donor to the NB-component of the complex, and binds Mg-ATP. The chain is Light-independent protochlorophyllide reductase iron-sulfur ATP-binding protein from Chlorobium limicola (strain DSM 245 / NBRC 103803 / 6330).